A 649-amino-acid polypeptide reads, in one-letter code: Centrosomal protein of 63 kDa-A (649 aa).

Coiled coils occupy residues 19–185 and 222–556; these read DSCE…YQHQ and EEEL…DAAS. Position 560 is a phosphoserine; by atm and atr (Ser-560). Residues 612–645 adopt a coiled-coil conformation; that stretch reads FLQEEEQRSHELLQRLNAHIEELKQESQRTVEHF.

The protein belongs to the CEP63 family. In terms of processing, phosphorylation at Ser-560 by atm and atr promotes its delocalization from the centrosome and impairs its ability to promote centrosome dependent spindle assembly.

It is found in the cytoplasm. It localises to the cytoskeleton. Its subcellular location is the microtubule organizing center. The protein resides in the centrosome. The protein localises to the centriole. Its function is as follows. Required for normal spindle assembly. Plays a key role in mother-centriole-dependent centriole duplication. Plays a role in DNA damage response. Following DNA damage, such as double-strand breaks (DSBs), is removed from centrosomes; this leads to the inactivation of spindle assembly and delay in mitotic progression. The sequence is that of Centrosomal protein of 63 kDa-A (cep63-a) from Xenopus laevis (African clawed frog).